Consider the following 469-residue polypeptide: uncharacterized protein (469 aa).

Helical transmembrane passes span 42–62, 179–199, and 249–269; these read DVIIFLLLFFVAFNVSSAYVI, IVLPPGAVILSPQGTLLVTPS, and NLKYLLIIAIFGTAIFGGLFV.

It localises to the cell membrane. This is an uncharacterized protein from Methanocaldococcus jannaschii (strain ATCC 43067 / DSM 2661 / JAL-1 / JCM 10045 / NBRC 100440) (Methanococcus jannaschii).